Consider the following 297-residue polypeptide: MLKIGSHVSMSGKHMLLAASKEAVSYGANTFMIYTGAPQNTRRKKIEDLNIEAGRAHMKENGIDEIVVHAPYIINIGNTTNPATFELGVDFLRSEIERTAAIGARQIVLHPGAHVGAGAETGIKKIIEGLNEVIVPGQNVQIALETMAGKGSECGRSFEELAEIIAGVTHNEHLSVCFDTCHTHDAGYDVANDFDGVLNEFDKIVGIDRIKVLHVNDSKNIKGARKDRHENIGFGEIGFDALQYIVHHEQLADIPKILETPYVGEDKKNKKPPYRFEIEMLKEKQFDKELLEKISAQ.

9 residues coordinate Zn(2+): His69, His110, Glu145, Asp179, His182, His214, Asp227, His229, and Glu259.

Belongs to the AP endonuclease 2 family. The cofactor is Zn(2+).

It carries out the reaction Endonucleolytic cleavage to 5'-phosphooligonucleotide end-products.. Its function is as follows. Endonuclease IV plays a role in DNA repair. It cleaves phosphodiester bonds at apurinic or apyrimidinic (AP) sites, generating a 3'-hydroxyl group and a 5'-terminal sugar phosphate. The protein is Probable endonuclease 4 of Bacillus velezensis (strain DSM 23117 / BGSC 10A6 / LMG 26770 / FZB42) (Bacillus amyloliquefaciens subsp. plantarum).